The chain runs to 364 residues: Aminomethyltransferase (364 aa).

The protein belongs to the GcvT family. In terms of assembly, the glycine cleavage system is composed of four proteins: P, T, L and H.

It carries out the reaction N(6)-[(R)-S(8)-aminomethyldihydrolipoyl]-L-lysyl-[protein] + (6S)-5,6,7,8-tetrahydrofolate = N(6)-[(R)-dihydrolipoyl]-L-lysyl-[protein] + (6R)-5,10-methylene-5,6,7,8-tetrahydrofolate + NH4(+). Functionally, the glycine cleavage system catalyzes the degradation of glycine. The polypeptide is Aminomethyltransferase (Shewanella denitrificans (strain OS217 / ATCC BAA-1090 / DSM 15013)).